The primary structure comprises 357 residues: Dual-specificity RNA methyltransferase RlmN (357 aa).

The Proton acceptor role is filled by Glu89. Residues 109 to 340 (EREKYTVCVS…CTIRESKALD (232 aa)) enclose the Radical SAM core domain. The cysteines at positions 116 and 345 are disulfide-linked. [4Fe-4S] cluster is bound by residues Cys123, Cys127, and Cys130. S-adenosyl-L-methionine-binding positions include 173–174 (GE), Ser203, 226–228 (SLH), and Asn302. Catalysis depends on Cys345, which acts as the S-methylcysteine intermediate.

This sequence belongs to the radical SAM superfamily. RlmN family. Requires [4Fe-4S] cluster as cofactor.

It localises to the cytoplasm. It carries out the reaction adenosine(2503) in 23S rRNA + 2 reduced [2Fe-2S]-[ferredoxin] + 2 S-adenosyl-L-methionine = 2-methyladenosine(2503) in 23S rRNA + 5'-deoxyadenosine + L-methionine + 2 oxidized [2Fe-2S]-[ferredoxin] + S-adenosyl-L-homocysteine. It catalyses the reaction adenosine(37) in tRNA + 2 reduced [2Fe-2S]-[ferredoxin] + 2 S-adenosyl-L-methionine = 2-methyladenosine(37) in tRNA + 5'-deoxyadenosine + L-methionine + 2 oxidized [2Fe-2S]-[ferredoxin] + S-adenosyl-L-homocysteine. Its function is as follows. Specifically methylates position 2 of adenine 2503 in 23S rRNA and position 2 of adenine 37 in tRNAs. m2A2503 modification seems to play a crucial role in the proofreading step occurring at the peptidyl transferase center and thus would serve to optimize ribosomal fidelity. This Helicobacter pylori (strain ATCC 700392 / 26695) (Campylobacter pylori) protein is Dual-specificity RNA methyltransferase RlmN.